Consider the following 469-residue polypeptide: Adenosylhomocysteinase (469 aa).

Residues Thr-58, Asp-133, and Glu-195 each contribute to the substrate site. Thr-196–Thr-198 serves as a coordination point for NAD(+). Positions 225 and 229 each coordinate substrate. NAD(+)-binding positions include Asn-230, Gly-259–Gly-264, Glu-282, Asn-317, Ile-338–His-340, and Asn-383.

It belongs to the adenosylhomocysteinase family. The cofactor is NAD(+).

The protein resides in the cytoplasm. It carries out the reaction S-adenosyl-L-homocysteine + H2O = L-homocysteine + adenosine. It participates in amino-acid biosynthesis; L-homocysteine biosynthesis; L-homocysteine from S-adenosyl-L-homocysteine: step 1/1. May play a key role in the regulation of the intracellular concentration of adenosylhomocysteine. The polypeptide is Adenosylhomocysteinase (Rhodopseudomonas palustris (strain ATCC BAA-98 / CGA009)).